Here is a 103-residue protein sequence, read N- to C-terminus: Integration host factor subunit alpha (103 aa).

Positions 51-73 (FGNFQLRDKPQRPGRNPKTGEEI) are disordered.

It belongs to the bacterial histone-like protein family. In terms of assembly, heterodimer of an alpha and a beta chain.

Its function is as follows. This protein is one of the two subunits of integration host factor, a specific DNA-binding protein that functions in genetic recombination as well as in transcriptional and translational control. The sequence is that of Integration host factor subunit alpha from Azoarcus sp. (strain BH72).